The primary structure comprises 550 residues: Arginine--tRNA ligase (550 aa).

A 'HIGH' region motif is present at residues 130–140 (ANPTGPIHLGG).

It belongs to the class-I aminoacyl-tRNA synthetase family. Monomer.

It is found in the cytoplasm. It carries out the reaction tRNA(Arg) + L-arginine + ATP = L-arginyl-tRNA(Arg) + AMP + diphosphate. The polypeptide is Arginine--tRNA ligase (Rhodococcus jostii (strain RHA1)).